The following is a 462-amino-acid chain: MSSVAKKDKRTMSVTALINRAWPMTPSPQQQQQMVPSTQHSNFLHAMATPSTTPNVELDIQWLNIESGFMSPMSPPEMKPDTAMLDGFRDDSTPPPPFKNYPPNHPLSGSKHLCSICGDRASGKHYGVYSCEGCKGFFKRTVRKDLTYACREDKNCIIDKRQRNRCQYCRYQKCLACGMKREAVQEERQRAARRTEDAHPSSSVQELSIERLLELEALVADSAEELQILRVGPESGVPAKYRAPVSSLCQIGNKQIAALIVWARDIPHFGQLEIDDQILLIKGSWNELLLFAIAWRSMEFLNDERENVDSRNTAPPQLICLMPGMTLHRNSALQAGVGQIFDRVLSELSLKMRSLRMDQAECVALKAIILLNPDVKGLKNKQEVDVLREKMFLCLDEYCRRSRGGEEGRFAALLLRLPALRSISLKSFEHLYLFHLVAEGSVSSYIRDALCNHAPPIDTNIM.

Residues 1–113 are modulating; the sequence is MSSVAKKDKR…NHPLSGSKHL (113 aa). 2 consecutive NR C4-type zinc fingers follow at residues 114 to 134 and 150 to 174; these read CSIC…CEGC and CRED…YQKC. Positions 114–179 form a DNA-binding region, nuclear receptor; it reads CSICGDRASG…RYQKCLACGM (66 aa). The segment at 180–201 is hinge; that stretch reads KREAVQEERQRAARRTEDAHPS. The NR LBD domain maps to 204–453; the sequence is VQELSIERLL…SYIRDALCNH (250 aa).

This sequence belongs to the nuclear hormone receptor family. NR2 subfamily. As to quaternary structure, heterodimer of USP and ECR. Abundant expression seen in males and ovaries.

It is found in the nucleus. This is Protein ultraspiracle homolog (USP) from Bombyx mori (Silk moth).